The sequence spans 329 residues: Malate dehydrogenase (329 aa).

NAD(+) is bound at residue 12-18 (GAAGQIG). Substrate contacts are provided by Arg-95 and Arg-101. Residues Asn-108, Gln-115, and 132-134 (VGN) contribute to the NAD(+) site. Positions 134 and 165 each coordinate substrate. Catalysis depends on His-190, which acts as the Proton acceptor.

This sequence belongs to the LDH/MDH superfamily. MDH type 2 family.

It catalyses the reaction (S)-malate + NAD(+) = oxaloacetate + NADH + H(+). Its function is as follows. Catalyzes the reversible oxidation of malate to oxaloacetate. The protein is Malate dehydrogenase of Herminiimonas arsenicoxydans.